The following is a 103-amino-acid chain: Small ribosomal subunit protein uS10 (103 aa).

Belongs to the universal ribosomal protein uS10 family. As to quaternary structure, part of the 30S ribosomal subunit.

Involved in the binding of tRNA to the ribosomes. This chain is Small ribosomal subunit protein uS10, found in Alcanivorax borkumensis (strain ATCC 700651 / DSM 11573 / NCIMB 13689 / SK2).